A 556-amino-acid chain; its full sequence is Double-strand-break repair protein rad21-like protein 1 (556 aa).

The protein belongs to the rad21 family. In terms of assembly, component of some meiotic cohesin complex composed of the SMC1 (SMC1A or SMC1B) and SMC3 heterodimer attached via their hinge domain, RAD21L which link them, and STAG3.

It localises to the nucleus. The protein localises to the chromosome. Its function is as follows. Meiosis-specific component of some cohesin complex required during the initial steps of prophase I in male meiosis. Probably required during early meiosis in males for separation of sister chromatids and homologous chromosomes. Replaces RAD21 in premeiotic S phase (during early stages of prophase I), while RAD21 reappears in later stages of prophase I. Involved in synaptonemal complex assembly, synapsis initiation and crossover recombination between homologous chromosomes during prophase I. In Homo sapiens (Human), this protein is Double-strand-break repair protein rad21-like protein 1 (RAD21L1).